We begin with the raw amino-acid sequence, 93 residues long: Bublin coiled-coil protein (93 aa).

2 disordered regions span residues 1–26 (MAGPNGDPHVLGGGTGDEGDEGGDTF) and 74–93 (QQQSKQLNTGADVQGSQPPA). Positions 17–26 (DEGDEGGDTF) are enriched in acidic residues. The stretch at 59-80 (LKELLESNRQTRLEFQQQSKQL) forms a coiled coil.

It belongs to the UPF0184 (EST00098) family.

The protein resides in the cell junction. Its subcellular location is the cytoplasm. It is found in the cytoskeleton. Essential for intermediate filament organization in intestinal cells, interacts with intermediate filament and regulates intestinal lumen morphology. The sequence is that of Bublin coiled-coil protein (BBLN) from Taeniopygia guttata (Zebra finch).